A 3473-amino-acid chain; its full sequence is MSSCSLKCSILPCVHIENNKNELHIENSKDENGINNIIQEDPNNGHNDNINNNDINNNNNNNDNNNTIDNCICEKSSEEISVHTEKCVHTVSLDVNVKDYNFEEFINSFESDRRNILLNTFNYFFYNNFGNLSEVKLKNGSIAHNYYYRKIALNIMNYDYEKEYRLYDDNRKINENSIIMQSSAYCINEENNSRPPLYEDLFLKKTKITNIDDKNTKETIKKYKLPFEPNFYSNRFFFLDNDMNGSLHQSTKNCTKYCNSFVVNYNNVSNCRKKKKKNTNPIIFNNINNNNNNNCDHVKPLCCSYILRFEGPPPHFLIIKFDKVNRKAYIVKRVPVNKNISFNLAKFIAEKYINMLRKNLRKREIKMERKRNNNILNSRTKRGSSKKEHIESNMENNNDNINNNDDDNNSNNNDDNNDNINNNNDNINNNNDNINNNNNSNNNDDDHLVCNNEIVPNNDCGTINNYSNNSSTNYSSDYSFSRNGEVLNEYNEEDLNNYLLNVDINSLPYEDYNSENYVNEKMCKNEYLDIDLENLIFSRDAEKYIKFLSNVKIYFLKKLDDIDYFNTNCKDPFENKIVIIVKMKYDICVKSKVFIFENMKDLESEYEYVDIDENEKDNDNICFKKGGDNTFVSLLNDDGHMNDANNNNNNNINCGDDGNNNNNNNNSFDADINSSSHVGNEPTGDKHETSKKEDTENEEAINAKTEGNFITRNFFGLFKNECNANNGSDKEHLKEEDVCNKNTEEEEKMNIIKSDNVNNNNNNNNNNNNKKEKGKKKKEKDADKNKKHKKKNIHDNNRKKKMTVNYRKKIIQFIRNNIYINSYIYDCFENKYTNNKFFKDDVIIIRNTKSEEQEEEEHQLSYNVPYYIYELNKFVFIKFMKFEKYINKNHDIANGYIKYLLQSNIKCINGYMIGIRWVPNVFAYEYYVYKITEDVKSDFKKENEYMINNNMNGNNNNNNNYNNDRYNNSRNCNTIYNYSLAIEKDSNEITMKYLIDYENKVIDNVLCVLHEYYQTSLFTEHCIFNLFKLVLLRVSLYIGVFNTKVITLDLDKAMYRMKKFSEPISMYDNYGFSENDNNMLLQGGDMLNMEYLMNEVDNNNNNNNNNNNNNVNNISNNGTNLEENANNANNANNPNNANNPNNANNSNNADYVNDYNDGYKEEDDDDEEEDNNLTKKKDEENTNYNININGENMNMNSNMNVEETFDETKNKNNLRITFSSVHFDNEGNKISDNNIYENRAKHVSDSDMNNNNNNNNNTNINYPSSHDKYNELFVKNEKCESESYLPNKLKNKKKVSYNLDNTSISLRNKRSRDVGSNQNCDHNNNSRGGGGGKCYGILKGEGDQFSIKYYSTSANNTSSTLINNKKEYYSNASDFSGTSHLTAKHKYHLRSSNPQSTDNYSSEEYMQRSSMRTRGAERSANRNKMLYKLMNKNGLIEPYWWFFYNLYENACIHEGSTITNNMNNNNNNINGNNYNNYYFNKYNNNNNNNNNNNNNQKKGTCGEDALNEEQKRILEKKYKINLLNHFCAKTEKLKIKYISMVHDIIYKKYMLLNNTIFPRNLHESEILYTLFPHEPHTFMFLYTDDNFQYQNEVFLKQITFSDNINWYHYPLGGQYNNIDLYKNDVHDEKERMVLHINDYYNGLGTSRYVIGKDFYVDHLIMGDSKDSTSNMLMSKNLKYSNLPNYEKVRANYREAHLLNEKEWKNIQNGGYYKTMLHLGEDMEHPYNFGVYQDPITSAYETNRNDYGFTNGILTNKILEPSTSSAVTAAVVSNNTGTTQNNNKYGTNSNNNNNNNNNNNNNNNNNKVFTFERRRRGVKTNEYYDYFVTDKTLLGGKGKFHNVGEKRSVSNTNFGRNNRYYDQMIGEDDDKKNTSDNDLTSLKRRKNGNSKRAKSNNLSNVKGYSIYNVENNGDAQADNGNNNVNNNLKGNMKGNNLNSNNIKSDVINHDDSLIPMGPLPTGVYFDSARKLWRCQWKENGKFKTKGFSLIHYSTLEEARKQCILYRCDVGNIPVKSEWLNPVYVRSSYFYSKKYSSSAHNATSAGTNYTTTAAHRELKTSSLNLSRLKEKTGVSQGVSTANNNDNNVNNMDNNVNNVDNNVNNVDNNLNNVDNNVNNNNVKSSGVEKGFMDGSSKGSNDENYYVGQTNTIGNTNNNRYSTRNNTAACAAANDKGNEIDISILQEFVSKNKEGGGVSVDGGGLLESALIERGLIESGLLDSGSVNKNNMSLRLNSKNVMLGYNGEENNKKKKKKNIVEDNIKNMNNVENIKNIKDIKNVNNMNNMNNMNNMNNYNFLFADKKNKNNNLNIGVKEEEKRRKQVDVVGDGSGTQALKRSKRSKSNSKYKMDLRVGDLKEDFGKDMSNLINEEDIENFRNTFNKEYLKSVLTNDNNNDGINNNNDDNNDDNNDDNNNNNNNNNKNNNKNSSNNKSNNNKKNYNNKNQNNNDNNNDNGNNNNNNNDDNNDDNNIRSNSFFLDGKDINNEYINNENFPNDIQSFFKFLNSKDVKDETKGKKYLDFKLGNGLDGEEEGGGDYDEKEDDLLDENKNGLNFLNDDINNNNNNNNNNNNNNNNNNNNNNNNNYNNDLFEAMKAFMKYNGNMMNNEKGELLYGKGGNNNNNNNNNNSGTYVKNKKSSKYDNKSYGGDGIPRKEMKKERSKKSQKLLNSQVNESSAPASNYKGGGVQFYMNLDTTNLLAASLMTNNIINNLNNQGNGDNSHVNNNYNSNALGDMMKSSNKEGVGLSWSPSNMCPDIFFQDIQNFINFAKRKERMNNGKEENGEGVQTNVRNTNNNAHIVGNNNNNNRNSGSIIENDVYENYLKSLIVQYENEEKLKEKQYVQMNNNNNNNNNNNNNNNNNNVKYFQFGDKEEEEDKENLANLDNDKLEKEKNGGGGVVSSSSSSPTTGFFQKYLNIFSKKKNGNESEEYMNNKSQVDNSKYVECGNGDKETNDYNTRRKKKDEKFSVSSNALYDMSKVLNNNGLGSSMNSYNEAYKKNLNFLLQKSSMNNNNMNNNNMNNNNMNNNNMNNNNMNNNNMNLNVYNNVTGDNNHMDNLDGGNNKGLKKYNNNLGFNNMSEASLYEYFNFAALNNNNGSNILGQDRKKNGHISINTKSSSIFMNGMHMNNYHNSVNNMNSFNSNSDHMEPKYDGYDDNMMRGMVERALSSSLYFDNKQKGKESSNNLNNNNNNNNNIINNMNHMNYINNNNNNIINNMNHMNYINNNNNNNQYVDGQLTENEISNLNVAGNVKSGKKKKGSTNDDENINLIKQSLPKGIYYDHAKKLYRVQYIINNSIKTKGFSVKKLGLAQAKIEAESFRNFCLENGLLNSRKRRLNSPYNKKDESFSMMPDNEEILSNLLFLYNSNMNNSMNKMSINNDGNNNDGNNNDGNNNDDNNNDDNNNDDNNNDGNNNDDNNNEGINNDDNNNEGINNDDNNNEGINNNDDNNNNDDNNNEGINNDDNNDDNNNDNEMSQNE.

Disordered stretches follow at residues 35 to 61 (NNII…NNNN), 366 to 450 (KMER…HLVC), 647 to 704 (NNNN…INAK), 750 to 801 (NIIK…RKKK), 1096 to 1196 (VDNN…MNMN), 1300 to 1328 (DNTS…NSRG), 1388 to 1418 (HLRS…GAER), 1773 to 1807 (NNTG…NNKV), and 1864 to 1898 (IGED…NNLS). Low complexity-rich tracts occupy residues 44–61 (NGHN…NNNN), 396–442 (NNND…NSNN), and 647–666 (NNNN…NNNN). A compositionally biased stretch (basic and acidic residues) spans 683–694 (TGDKHETSKKED). Positions 751–768 (IIKSDNVNNNNNNNNNNN) are enriched in low complexity. A compositionally biased stretch (basic residues) spans 785-801 (NKKHKKKNIHDNNRKKK). The span at 1098-1156 (NNNNNNNNNNNNNVNNISNNGTNLEENANNANNANNPNNANNPNNANNSNNADYVNDYN) shows a compositional bias: low complexity. Acidic residues predominate over residues 1160–1171 (KEEDDDDEEEDN). The segment covering 1182–1196 (TNYNININGENMNMN) has biased composition (low complexity). 2 stretches are compositionally biased toward polar residues: residues 1314–1326 (VGSN…NNNS) and 1390–1412 (RSSN…SSMR). Residues 1773–1805 (NNTGTTQNNNKYGTNSNNNNNNNNNNNNNNNNN) are compositionally biased toward low complexity. A compositionally biased stretch (basic residues) spans 1881–1893 (LKRRKNGNSKRAK). A DNA-binding region (AP2/ERF 1) is located at residues 1957–2011 (PLPTGVYFDSARKLWRCQWKENGKFKTKGFSLIHYSTLEEARKQCILYRCDVGNI). Disordered stretches follow at residues 2068-2088 (EKTG…NVNN), 2319-2343 (QVDV…SNSK), 2387-2470 (TNDN…NIRS), 2520-2584 (LGNG…NYNN), 2609-2677 (LYGK…PASN), 2840-2860 (MNNN…NNVK), 2881-2902 (NDKL…SSSP), and 2937-2960 (KYVE…KKDE). Basic residues predominate over residues 2333 to 2342 (KRSKRSKSNS). Low complexity-rich tracts occupy residues 2388–2400 (NDNN…NNND) and 2409–2460 (DNNN…NNND). The segment covering 2525–2542 (DGEEEGGGDYDEKEDDLL) has biased composition (acidic residues). Composition is skewed to low complexity over residues 2557–2584 (NNNN…NYNN) and 2615–2624 (NNNNNNNNNN). Over residues 2663 to 2675 (LLNSQVNESSAPA) the composition is skewed to polar residues. The segment covering 2841–2858 (NNNNNNNNNNNNNNNNNN) has biased composition (low complexity). Residues 2943–2953 (NGDKETNDYNT) are compositionally biased toward basic and acidic residues. Residues 3268–3321 (SLPKGIYYDHAKKLYRVQYIINNSIKTKGFSVKKLGLAQAKIEAESFRNFCLEN) constitute a DNA-binding region (AP2/ERF 2). Over residues 3369–3391 (KMSINNDGNNNDGNNNDGNNNDD) the composition is skewed to low complexity. Residues 3369–3473 (KMSINNDGNN…NNDNEMSQNE (105 aa)) are disordered. The span at 3392 to 3403 (NNNDDNNNDDNN) shows a compositional bias: acidic residues. The segment covering 3404 to 3457 (NDGNNNDDNNNEGINNDDNNNEGINNDDNNNEGINNNDDNNNNDDNNNEGINND) has biased composition (low complexity).

It localises to the nucleus. The polypeptide is AP2/ERF domain-containing protein PFD0985w (Plasmodium falciparum (isolate 3D7)).